A 472-amino-acid polypeptide reads, in one-letter code: Transmembrane protein 8B (472 aa).

Positions 1-36 are disordered; it reads MNMPQSLGNQPLPPEPPSLGTPAEGPGTTSPPEHCW. The Extracellular portion of the chain corresponds to 1–233; it reads MNMPQSLGNQ…ADALTYGFQL (233 aa). Residues asparagine 92 and asparagine 100 are each glycosylated (N-linked (GlcNAc...) asparagine). In terms of domain architecture, EGF-like spans 182–221; that stretch reads FLSPCVDDCGPYGQCKLLRTHNYLYAACECKAGWRGWGCT. Disulfide bonds link cysteine 186–cysteine 196, cysteine 190–cysteine 209, and cysteine 211–cysteine 220. A helical membrane pass occupies residues 234 to 254; that stretch reads LSTLLLCLSNLMFLPPVVLAI. Topologically, residues 255–257 are cytoplasmic; that stretch reads RSR. A helical transmembrane segment spans residues 258-277; the sequence is YVLEAAVYTFTMFFSTFYHA. The Extracellular portion of the chain corresponds to 278–292; it reads CDQPGIVVFCIMDYD. A helical membrane pass occupies residues 293 to 313; the sequence is VLQFCDFLGSLMSVWVTVIAM. Residues 314 to 315 lie on the Cytoplasmic side of the membrane; sequence AR. Residues 316–336 traverse the membrane as a helical segment; sequence LQPVVKQVLYLLGAMLLSMAL. Topologically, residues 337–342 are extracellular; sequence QLDRHG. A helical membrane pass occupies residues 343 to 363; sequence LWNLLGPSLFALGILATAWTV. The Cytoplasmic portion of the chain corresponds to 364-379; it reads RSVRRRHCYPPTWRRW. A helical transmembrane segment spans residues 380-400; the sequence is LFYLCPGSLIAGSAVLLYAFV. Over 401-405 the chain is Extracellular; the sequence is ETRDN. The chain crosses the membrane as a helical span at residues 406–426; that stretch reads YFYIHSIWHMLIAGSVGFLLP. Topologically, residues 427–472 are cytoplasmic; sequence PRAKTDHGVPSGARARGCGYQLCINEQEELGLVGPGGATVSSICAS.

This sequence belongs to the TMEM8 family. As to quaternary structure, isoform 2 (via its cytoplasmic part) interacts with EZR. Isoform 2 is N-glycosylated.

The protein resides in the cell membrane. It localises to the cytoplasm. Its subcellular location is the nucleus. It is found in the mitochondrion. The protein localises to the endoplasmic reticulum. Functionally, may function as a regulator of the EGFR pathway. Probable tumor suppressor which may function in cell growth, proliferation and adhesion. This chain is Transmembrane protein 8B (TMEM8B), found in Homo sapiens (Human).